The primary structure comprises 100 residues: MTDNTTSSDLIKNVETARSTIDGLIESLGWIELNYRCERQCNWDEVCYTPSWGPSPMGMTEPGSHNEGFGTHFDESRQRLVINSKLQCININDLMVNRNH.

This is an uncharacterized protein from Saccharomyces cerevisiae (strain ATCC 204508 / S288c) (Baker's yeast).